The following is a 255-amino-acid chain: Thiazole synthase (255 aa).

Catalysis depends on Lys-96, which acts as the Schiff-base intermediate with DXP. 1-deoxy-D-xylulose 5-phosphate is bound by residues Gly-157, 183 to 184 (AG), and 205 to 206 (NT).

The protein belongs to the ThiG family. As to quaternary structure, homotetramer. Forms heterodimers with either ThiH or ThiS.

It localises to the cytoplasm. The catalysed reaction is [ThiS sulfur-carrier protein]-C-terminal-Gly-aminoethanethioate + 2-iminoacetate + 1-deoxy-D-xylulose 5-phosphate = [ThiS sulfur-carrier protein]-C-terminal Gly-Gly + 2-[(2R,5Z)-2-carboxy-4-methylthiazol-5(2H)-ylidene]ethyl phosphate + 2 H2O + H(+). The protein operates within cofactor biosynthesis; thiamine diphosphate biosynthesis. Catalyzes the rearrangement of 1-deoxy-D-xylulose 5-phosphate (DXP) to produce the thiazole phosphate moiety of thiamine. Sulfur is provided by the thiocarboxylate moiety of the carrier protein ThiS. In vitro, sulfur can be provided by H(2)S. The polypeptide is Thiazole synthase (Bacillus licheniformis (strain ATCC 14580 / DSM 13 / JCM 2505 / CCUG 7422 / NBRC 12200 / NCIMB 9375 / NCTC 10341 / NRRL NRS-1264 / Gibson 46)).